Consider the following 632-residue polypeptide: Chaperone protein DnaK (632 aa).

Residue Thr-198 is modified to Phosphothreonine; by autocatalysis.

This sequence belongs to the heat shock protein 70 family.

In terms of biological role, acts as a chaperone. The polypeptide is Chaperone protein DnaK (Rhodopseudomonas palustris (strain BisB18)).